A 312-amino-acid chain; its full sequence is Thioredoxin reductase (312 aa).

Position 33–43 (33–43) interacts with FAD; sequence EGFFSGIAGGQ. Residues C138 and C141 are joined by a disulfide bond. Position 283-292 (283-292) interacts with FAD; the sequence is DVQDKYYRQA.

Belongs to the class-II pyridine nucleotide-disulfide oxidoreductase family. In terms of assembly, homodimer. The cofactor is FAD.

It localises to the cytoplasm. The enzyme catalyses [thioredoxin]-dithiol + NADP(+) = [thioredoxin]-disulfide + NADPH + H(+). The protein is Thioredoxin reductase (trxB) of Chlamydia trachomatis serovar D (strain ATCC VR-885 / DSM 19411 / UW-3/Cx).